The sequence spans 412 residues: CCA-adding enzyme (412 aa).

Ser41 and Lys44 together coordinate ATP. The CTP site is built by Ser41 and Lys44. Asp53, Asp55, and Asp106 together coordinate Mg(2+). Residues His129, Lys149, and Tyr158 each contribute to the ATP site. CTP is bound by residues His129, Lys149, and Tyr158.

Belongs to the tRNA nucleotidyltransferase/poly(A) polymerase family. Archaeal CCA-adding enzyme subfamily. In terms of assembly, homodimer. Mg(2+) is required as a cofactor.

It carries out the reaction a tRNA precursor + 2 CTP + ATP = a tRNA with a 3' CCA end + 3 diphosphate. It catalyses the reaction a tRNA with a 3' CCA end + 2 CTP + ATP = a tRNA with a 3' CCACCA end + 3 diphosphate. In terms of biological role, catalyzes the addition and repair of the essential 3'-terminal CCA sequence in tRNAs without using a nucleic acid template. Adds these three nucleotides in the order of C, C, and A to the tRNA nucleotide-73, using CTP and ATP as substrates and producing inorganic pyrophosphate. tRNA 3'-terminal CCA addition is required both for tRNA processing and repair. Also involved in tRNA surveillance by mediating tandem CCA addition to generate a CCACCA at the 3' terminus of unstable tRNAs. While stable tRNAs receive only 3'-terminal CCA, unstable tRNAs are marked with CCACCA and rapidly degraded. In Saccharolobus islandicus (strain Y.G.57.14 / Yellowstone #1) (Sulfolobus islandicus), this protein is CCA-adding enzyme.